Consider the following 1078-residue polypeptide: Nonribosomal peptide synthetase aneB (1078 aa).

The segment at Phe20–Ile417 is adenylation. Positions Met559–Pro635 constitute a Carrier domain. The residue at position 596 (Ser596) is an O-(pantetheine 4'-phosphoryl)serine. A condensation region spans residues Asn699 to Thr1013.

The protein belongs to the NRP synthetase family.

It carries out the reaction holo-[peptidyl-carrier protein] + L-proline + ATP = L-prolyl-[peptidyl-carrier protein] + AMP + diphosphate. Its pathway is secondary metabolite biosynthesis. Its function is as follows. Nonribosomal peptide synthetase; part of the gene cluster that mediates the biosynthesis of aculenes, a unique type of norsesquiterpenes that contain a nordaucane skeleton linked to an L-proline moiety and are of mixed biosynthetic origin. The pathway begins with the synthesis of dauca-4,7-diene by the terpene cyclase aneC using farnesyl pyrophosphate (FPP) as substrate. The cytochrome P450 monooxygenase aneF then performs the initial oxidation at C-12 of dauca-4,7-diene to yield asperaculane D. Asperaculane D is substrate of the cytochrome P450 monooxygenase aneD for C-10 hydroxylation to yield asperaculane E. The cytochrome P450 monooxygenase aneG then converts asperaculane E into aculene D via C-2 oxidation. The monomodular nonribosomal peptide synthase aneB adenylates L-proline and the thiohydrolase aneE transfers this activated L-proline derivative to aculenes D and C to produce respectively aculenes B and A. The dioxygenase aneA converts aculene D into aculene C, and aculene B into aculene A by introducing the 5,6-alkene moiety. Asperculanes A, B, C and F, as well as 14-prolyl asperculane C, might be shunt products of the pathway. The protein is Nonribosomal peptide synthetase aneB of Aspergillus aculeatus (strain ATCC 16872 / CBS 172.66 / WB 5094).